The primary structure comprises 499 residues: Probable malate:quinone oxidoreductase 4 (499 aa).

It belongs to the MQO family. FAD serves as cofactor.

It carries out the reaction (S)-malate + a quinone = a quinol + oxaloacetate. It functions in the pathway carbohydrate metabolism; tricarboxylic acid cycle; oxaloacetate from (S)-malate (quinone route): step 1/1. The protein is Probable malate:quinone oxidoreductase 4 of Staphylococcus epidermidis (strain ATCC 12228 / FDA PCI 1200).